The chain runs to 348 residues: Signal recognition particle receptor FtsY (348 aa).

GTP contacts are provided by residues 143-150 (GVNGVGKT), 225-229 (DTSGR), and 289-292 (TKMD).

This sequence belongs to the GTP-binding SRP family. FtsY subfamily. Part of the signal recognition particle protein translocation system, which is composed of SRP and FtsY.

It localises to the cell membrane. Its subcellular location is the cytoplasm. It catalyses the reaction GTP + H2O = GDP + phosphate + H(+). Functionally, involved in targeting and insertion of nascent membrane proteins into the cytoplasmic membrane. Acts as a receptor for the complex formed by the signal recognition particle (SRP) and the ribosome-nascent chain (RNC). The polypeptide is Signal recognition particle receptor FtsY (Mycoplasma pneumoniae (strain ATCC 29342 / M129 / Subtype 1) (Mycoplasmoides pneumoniae)).